The chain runs to 385 residues: Bifunctional chorismate mutase/prephenate dehydratase (385 aa).

Residues 1-92 (MPSKNDLLSF…ESVLTQKKLL (92 aa)) enclose the Chorismate mutase domain. Arg11, Arg28, Lys39, Asp48, Glu52, Ser84, and Gln88 together coordinate substrate. The Prephenate dehydratase domain occupies 105–285 (SFSFLGPKGS…NITRFILLSR (181 aa)). Positions 286-385 (KPVSISSKIP…PSENITPIIP (100 aa)) are regulatory. The 78-residue stretch at 299–376 (TLIFNTGQES…KFIKILGCYP (78 aa)) folds into the ACT domain.

The protein localises to the cytoplasm. The catalysed reaction is chorismate = prephenate. The enzyme catalyses prephenate + H(+) = 3-phenylpyruvate + CO2 + H2O. It functions in the pathway amino-acid biosynthesis; L-phenylalanine biosynthesis; phenylpyruvate from prephenate: step 1/1. It participates in metabolic intermediate biosynthesis; prephenate biosynthesis; prephenate from chorismate: step 1/1. In terms of biological role, catalyzes the Claisen rearrangement of chorismate to prephenate and the decarboxylation/dehydration of prephenate to phenylpyruvate. This Buchnera aphidicola subsp. Schizaphis graminum (strain Sg) protein is Bifunctional chorismate mutase/prephenate dehydratase (pheA).